The chain runs to 381 residues: Probable tRNA sulfurtransferase (381 aa).

The 109-residue stretch at 68–176 (DLALKLLKKV…NDGAYIFTEK (109 aa)) folds into the THUMP domain. ATP is bound by residues 194-195 (LI), lysine 276, glycine 298, and glutamine 307.

It belongs to the ThiI family.

Its subcellular location is the cytoplasm. The catalysed reaction is [ThiI sulfur-carrier protein]-S-sulfanyl-L-cysteine + a uridine in tRNA + 2 reduced [2Fe-2S]-[ferredoxin] + ATP + H(+) = [ThiI sulfur-carrier protein]-L-cysteine + a 4-thiouridine in tRNA + 2 oxidized [2Fe-2S]-[ferredoxin] + AMP + diphosphate. It carries out the reaction [ThiS sulfur-carrier protein]-C-terminal Gly-Gly-AMP + S-sulfanyl-L-cysteinyl-[cysteine desulfurase] + AH2 = [ThiS sulfur-carrier protein]-C-terminal-Gly-aminoethanethioate + L-cysteinyl-[cysteine desulfurase] + A + AMP + 2 H(+). It functions in the pathway cofactor biosynthesis; thiamine diphosphate biosynthesis. Functionally, catalyzes the ATP-dependent transfer of a sulfur to tRNA to produce 4-thiouridine in position 8 of tRNAs, which functions as a near-UV photosensor. Also catalyzes the transfer of sulfur to the sulfur carrier protein ThiS, forming ThiS-thiocarboxylate. This is a step in the synthesis of thiazole, in the thiamine biosynthesis pathway. The sulfur is donated as persulfide by IscS. In Methanocaldococcus jannaschii (strain ATCC 43067 / DSM 2661 / JAL-1 / JCM 10045 / NBRC 100440) (Methanococcus jannaschii), this protein is Probable tRNA sulfurtransferase.